The primary structure comprises 148 residues: Small ribosomal subunit protein uS9 (148 aa).

This sequence belongs to the universal ribosomal protein uS9 family.

In Drosophila melanogaster (Fruit fly), this protein is Small ribosomal subunit protein uS9 (RpS16).